Reading from the N-terminus, the 469-residue chain is Biotin synthase (469 aa).

Residues 51–278 (MTVKVNYLVN…DKEIRMAGGR (228 aa)) enclose the Radical SAM core domain. [4Fe-4S] cluster contacts are provided by cysteine 66, cysteine 70, and cysteine 73. [2Fe-2S] cluster is bound by residues cysteine 110, cysteine 143, cysteine 203, and arginine 273. A disordered region spans residues 326–469 (AGPDPSRDRH…GAGTSVAPNA (144 aa)). Composition is skewed to low complexity over residues 363 to 384 (GSAA…APAD) and 405 to 428 (AGGP…MSPA).

Belongs to the radical SAM superfamily. Biotin synthase family. Homodimer. It depends on [4Fe-4S] cluster as a cofactor. [2Fe-2S] cluster serves as cofactor.

It carries out the reaction (4R,5S)-dethiobiotin + (sulfur carrier)-SH + 2 reduced [2Fe-2S]-[ferredoxin] + 2 S-adenosyl-L-methionine = (sulfur carrier)-H + biotin + 2 5'-deoxyadenosine + 2 L-methionine + 2 oxidized [2Fe-2S]-[ferredoxin]. It functions in the pathway cofactor biosynthesis; biotin biosynthesis; biotin from 7,8-diaminononanoate: step 2/2. Functionally, catalyzes the conversion of dethiobiotin (DTB) to biotin by the insertion of a sulfur atom into dethiobiotin via a radical-based mechanism. The polypeptide is Biotin synthase (Kocuria rhizophila (strain ATCC 9341 / DSM 348 / NBRC 103217 / DC2201)).